Reading from the N-terminus, the 274-residue chain is Transmembrane protein 106B (274 aa).

Over residues 1 to 11 (MGKSLSHLPLH) the composition is skewed to low complexity. The disordered stretch occupies residues 1 to 20 (MGKSLSHLPLHSSKEDAYDG). A lipid anchor (N-myristoyl glycine) is attached at Gly2. The Cytoplasmic portion of the chain corresponds to 2–96 (GKSLSHLPLH…QRLRPRRTKL (95 aa)). Position 33 is a phosphoserine (Ser33). A helical transmembrane segment spans residues 97 to 117 (YVMASVFVCLLLSGLAVFFLF). Over 118–274 (PRSIDVKYIG…EYLNVLQPQQ (157 aa)) the chain is Lumenal. 4 N-linked (GlcNAc...) asparagine glycosylation sites follow: Asn145, Asn151, Asn164, and Asn183. Residues Cys214 and Cys253 are joined by a disulfide bond. N-linked (GlcNAc...) asparagine glycosylation is present at Asn256.

This sequence belongs to the TMEM106 family. In terms of assembly, can form homomers. Interacts (via N-terminus) with MAP6 (via C-terminus). Interacts (via C-terminus) with the vacuolar-type ATPase subunit ATP6AP1. Interacts (via N-terminus) with AP2M1 and CLTC. Interacts with TMEM106C. As to quaternary structure, (Microbial infection) Interacts with SARS coronavirus-2/SARS-CoV-2 spike protein (via RBD domain). Expressed in the brain, including in the frontal cortex (at protein level). Expressed in lung epithelial cells.

It is found in the late endosome membrane. Its subcellular location is the lysosome membrane. It localises to the cell membrane. Its function is as follows. In neurons, involved in the transport of late endosomes/lysosomes. May be involved in dendrite morphogenesis and maintenance by regulating lysosomal trafficking. May act as a molecular brake for retrograde transport of late endosomes/lysosomes, possibly via its interaction with MAP6. In motoneurons, may mediate the axonal transport of lysosomes and axonal sorting at the initial segment. It remains unclear whether TMEM106B affects the transport of moving lysosomes in the anterograde or retrograde direction in neurites and whether it is important in the sorting of lysosomes in axons or in dendrites. In neurons, may also play a role in the regulation of lysosomal size and responsiveness to stress. Required for proper lysosomal acidification. In terms of biological role, (Microbial infection) Plays a role in human coronavirus SARS-CoV-2 infection, but not in common cold coronaviruses HCoV-229E and HCoV-OC43 infections. Involved in ACE2-independent SARS-CoV-2 cell entry. Required for post-endocytic stage of virus entry, facilitates spike-mediated membrane fusion. Virus attachment and endocytosis can also be mediated by other cell surface receptors. The protein is Transmembrane protein 106B of Homo sapiens (Human).